Consider the following 727-residue polypeptide: Elongation factor 2 (727 aa).

In terms of domain architecture, tr-type G spans 19–260 (DQIRNMGICA…MAIKHLPNPL (242 aa)). Residues 28-35 (AHIDHGKT), 94-98 (DTPGH), and 148-151 (NKVD) each bind GTP. His-603 is subject to Diphthamide.

The protein belongs to the TRAFAC class translation factor GTPase superfamily. Classic translation factor GTPase family. EF-G/EF-2 subfamily.

The protein resides in the cytoplasm. Functionally, catalyzes the GTP-dependent ribosomal translocation step during translation elongation. During this step, the ribosome changes from the pre-translocational (PRE) to the post-translocational (POST) state as the newly formed A-site-bound peptidyl-tRNA and P-site-bound deacylated tRNA move to the P and E sites, respectively. Catalyzes the coordinated movement of the two tRNA molecules, the mRNA and conformational changes in the ribosome. In Methanococcus maripaludis (strain C7 / ATCC BAA-1331), this protein is Elongation factor 2.